The primary structure comprises 221 residues: 7-carboxy-7-deazaguanine synthase (221 aa).

Substrate is bound by residues 12–14 and arginine 27; that span reads ING. The Radical SAM core domain occupies 18–216; that stretch reads KSGQLSVFIR…IQIHKIIWNP (199 aa). The [4Fe-4S] cluster site is built by cysteine 31, cysteine 35, and cysteine 38. Threonine 40 lines the Mg(2+) pocket. Threonine 73 lines the substrate pocket. Glycine 75 is a binding site for S-adenosyl-L-methionine.

This sequence belongs to the radical SAM superfamily. 7-carboxy-7-deazaguanine synthase family. In terms of assembly, homodimer. [4Fe-4S] cluster serves as cofactor. S-adenosyl-L-methionine is required as a cofactor. The cofactor is Mg(2+).

It catalyses the reaction 6-carboxy-5,6,7,8-tetrahydropterin + H(+) = 7-carboxy-7-deazaguanine + NH4(+). It functions in the pathway purine metabolism; 7-cyano-7-deazaguanine biosynthesis. Functionally, catalyzes the complex heterocyclic radical-mediated conversion of 6-carboxy-5,6,7,8-tetrahydropterin (CPH4) to 7-carboxy-7-deazaguanine (CDG), a step common to the biosynthetic pathways of all 7-deazapurine-containing compounds. This Clostridium acetobutylicum (strain ATCC 824 / DSM 792 / JCM 1419 / IAM 19013 / LMG 5710 / NBRC 13948 / NRRL B-527 / VKM B-1787 / 2291 / W) protein is 7-carboxy-7-deazaguanine synthase.